The sequence spans 638 residues: Threonine--tRNA ligase (638 aa).

Positions 1–61 constitute a TGS domain; that stretch reads MPIITLPDGT…DYDAEIKIIT (61 aa). The interval 242-533 is catalytic; sequence DHRKIGKKMD…LIENYAGNFP (292 aa). Zn(2+)-binding residues include C333, H384, and H510.

This sequence belongs to the class-II aminoacyl-tRNA synthetase family. In terms of assembly, homodimer. Zn(2+) serves as cofactor.

It localises to the cytoplasm. The enzyme catalyses tRNA(Thr) + L-threonine + ATP = L-threonyl-tRNA(Thr) + AMP + diphosphate + H(+). Functionally, catalyzes the attachment of threonine to tRNA(Thr) in a two-step reaction: L-threonine is first activated by ATP to form Thr-AMP and then transferred to the acceptor end of tRNA(Thr). Also edits incorrectly charged L-seryl-tRNA(Thr). The sequence is that of Threonine--tRNA ligase from Prochlorococcus marinus (strain MIT 9211).